The following is a 596-amino-acid chain: MLRTHDLGSLRSEHIGQTVTLAGWVGRRRDHGGVAFVDLRDASGVSQVVVREEEVFHGLRNEYVLQVIGTVSQRPEGNENPALATGQIEVIAEKVTILNTSDPLPFQIDEHVEVGEEARLKHRYLDLRRPGPARNMRLRSEANRVARELLHRDGYVEIETPTLTRSTPEGARDFVVPARLAPGSWYALPQSPQLFKQLLQVGGFEKYYQIARCYRDEDFRADRQPEFTQLDIEASFVEQDDIISLGESIVKALWQLIDVEIPTPIQRITYADAMARYGSDKPDLRFGLELTELTEFFKDTNFGVFKAPYVGAVVMPGGASQARRALDAWQEWAKQRGAKGLAYVLFKEDGELAGPVAKNLTDTERAGLADAVGAKPGDCIFFAAGEKTPSRALLGAARVEIGHRTGLINPADWAFCWVVDAPMFEPAAAAVASGDVAVGAGQWTAVHHAFTSPKPEFMDSFDKDPESALSYAYDIVCNGNEIGGGSIRIHERDVQERVFELMGLDKADAETKFGFLLEGFKFGAPPHGGIAFGWDRVVALLAGVESIRDVIAFPKSGGGYDPLTQAPAPITAQQRKEAGVDFKPEAKKADPGATKA.

An L-aspartate-binding site is contributed by Glu-169. Residues Gln-193–Lys-196 are aspartate. An L-aspartate-binding site is contributed by Arg-215. Residues Arg-215–Glu-217 and Gln-224 contribute to the ATP site. L-aspartate is bound at residue His-447. Glu-481 contributes to the ATP binding site. Arg-488 serves as a coordination point for L-aspartate. Gly-533–Arg-536 is an ATP binding site. The tract at residues Gly-559–Ala-596 is disordered. Residues Gln-574–Asp-590 show a composition bias toward basic and acidic residues.

The protein belongs to the class-II aminoacyl-tRNA synthetase family. Type 1 subfamily. In terms of assembly, homodimer.

The protein localises to the cytoplasm. The enzyme catalyses tRNA(Asx) + L-aspartate + ATP = L-aspartyl-tRNA(Asx) + AMP + diphosphate. Aspartyl-tRNA synthetase with relaxed tRNA specificity since it is able to aspartylate not only its cognate tRNA(Asp) but also tRNA(Asn). Reaction proceeds in two steps: L-aspartate is first activated by ATP to form Asp-AMP and then transferred to the acceptor end of tRNA(Asp/Asn). The chain is Aspartate--tRNA(Asp/Asn) ligase from Arthrobacter sp. (strain FB24).